Here is a 261-residue protein sequence, read N- to C-terminus: Small ribosomal subunit protein mS23 (261 aa).

A disordered region spans residues 228-261; it reads EQRAAAFTGAPEIPSTEDSLGLEEGVEEKQPQQA.

This sequence belongs to the mitochondrion-specific ribosomal protein mS23 family. In terms of assembly, component of the mitochondrial small ribosomal subunit.

It is found in the mitochondrion. The polypeptide is Small ribosomal subunit protein mS23 (rsm25) (Aspergillus oryzae (strain ATCC 42149 / RIB 40) (Yellow koji mold)).